The primary structure comprises 291 residues: Protease HtpX (291 aa).

The next 2 membrane-spanning stretches (helical) occupy residues 4 to 24 (ILLF…TLKL) and 36 to 56 (GSLL…SLFI). His142 contributes to the Zn(2+) binding site. The active site involves Glu143. Residue His146 coordinates Zn(2+). 2 helical membrane-spanning segments follow: residues 150–170 (GDMV…MFFA) and 193–213 (FVAT…IVMW). Glu219 is a binding site for Zn(2+).

This sequence belongs to the peptidase M48B family. The cofactor is Zn(2+).

The protein resides in the cell inner membrane. This chain is Protease HtpX, found in Pseudomonas aeruginosa (strain LESB58).